The sequence spans 178 residues: FXYD domain-containing ion transport regulator 5 (178 aa).

The signal sequence occupies residues 1-21 (MSLSSRLCLLTIVALILPSRG). Positions 21–59 (GQTPKKPTSIFTADQTSATTRDNVPDPDQTSPGVQTTPL) are enriched in polar residues. Positions 21-130 (GQTPKKPTSI…SYIEHPLDSN (110 aa)) are disordered. The Extracellular segment spans residues 22-145 (QTPKKPTSIF…YYDDTTLRKR (124 aa)). The span at 67 to 79 (TGSQTAAQTETQQ) shows a compositional bias: low complexity. The span at 80–100 (LTKMATSNPVSDPGPHTSSKK) shows a compositional bias: polar residues. The chain crosses the membrane as a helical span at residues 146–166 (GLLVAAVLFITGIIILTSGKC). At 167 to 178 (RQLSQFCLNRHR) the chain is on the cytoplasmic side.

The protein belongs to the FXYD family. As to quaternary structure, regulatory subunit of the sodium/potassium-transporting ATPase which is composed of a catalytic alpha subunit, a non-catalytic beta subunit and an additional regulatory subunit. The regulatory subunit, a member of the FXYD protein family, modulates the enzymatic activity in a tissue- and isoform-specific way by changing affinities of the Na+/K+-ATPase toward Na(+), K(+) or ATP. Glycosylated. Expressed mainly in epithelial tissue, such as lung, intestine and kidney. Not detected in brain, liver, muscle, and heart.

The protein resides in the cell membrane. Its subcellular location is the basolateral cell membrane. In terms of biological role, associates with and regulates the activity of the sodium/potassium-transporting ATPase (NKA) which catalyzes the hydrolysis of ATP coupled with the exchange of Na(+) and K(+) ions across the plasma membrane. May increase NKA activity by increasing the apparent affinity for Na(+). Involved in down-regulation of E-cadherin which results in reduced cell adhesion. Promotes metastasis. This is FXYD domain-containing ion transport regulator 5 (Fxyd5) from Mus musculus (Mouse).